The sequence spans 362 residues: MEHNGSASNAGKIHQNRLSSVTEDEDQDAALTIVTVLDRVATVVDSVQASQKRIEERHREMGNAIKSVQIDLLKLSQSHSNTGYVVNKLFEKTRKVSAHIKDVKARVEKQQVRVTKVETKQEEIMKKNKFRVVIFQEDVPCPASLSVVKDRSLPENEEEAEEVFDPPIDLSSDEEYYVEESRSARLRKSGKEHIDHIKKAFSKENMQKTRQNFDKKVSGIRTRIVTPERRERLRQSGERLRQSGERLRQSGERFKKSISNATPSKEAFKIRSLRKPKDPKAEGQEVDRGMGVDIISGSLALGPIHEFHSDGFSETEKEVTKVGYIPQEGGDPPTPEPLKVTFKPQVRVEDDESLLLELKQSS.

The segment at 1 to 24 (MEHNGSASNAGKIHQNRLSSVTED) is disordered. A coiled-coil region spans residues 100 to 120 (IKDVKARVEKQQVRVTKVETK). 3 positions are modified to phosphoserine: Ser-152, Ser-171, and Ser-172. The segment covering 227–255 (PERRERLRQSGERLRQSGERLRQSGERFK) has biased composition (basic and acidic residues). Positions 227 to 261 (PERRERLRQSGERLRQSGERLRQSGERFKKSISNA) are disordered. At Tyr-324 the chain carries Phosphotyrosine. A Phosphothreonine modification is found at Thr-334. A Phosphoserine modification is found at Ser-353.

The protein belongs to the CAVIN family. Component of the CAVIN complex composed of CAVIN1, CAVIN2, CAVIN3 and CAVIN4. Interacts with CAVIN1, CAV3, ADRA1A and ADRA1B. Interacts with CAVIN2; this augments the transactivation of NPPA. Interacts with MAPK1 and MAPK3. As to expression, expressed at much higher levels in cardiomyocytes than in non-cardiomyocytes.

It localises to the cytoplasm. Its subcellular location is the myofibril. The protein resides in the sarcomere. The protein localises to the cytosol. It is found in the cell membrane. It localises to the sarcolemma. Its subcellular location is the membrane. The protein resides in the caveola. Its function is as follows. Modulates the morphology of formed caveolae in cardiomyocytes, but is not required for caveolar formation. Facilitates the recruitment of MAPK1/3 to caveolae within cardiomyocytes and regulates alpha-1 adrenergic receptor-induced hypertrophic responses in cardiomyocytes through MAPK1/3 activation. Contributes to proper membrane localization and stabilization of caveolin-3 (CAV3) in cardiomyocytes. Induces RHOA activation and activates NPPA transcription and myofibrillar organization through the Rho/ROCK signaling pathway. This Rattus norvegicus (Rat) protein is Caveolae-associated protein 4.